The following is a 348-amino-acid chain: Holliday junction branch migration complex subunit RuvB (348 aa).

The large ATPase domain (RuvB-L) stretch occupies residues 4-186 (TDRIISANTA…FGIIQRLEFY (183 aa)). ATP contacts are provided by residues isoleucine 25, arginine 26, glycine 67, lysine 70, threonine 71, threonine 72, 133-135 (EDY), arginine 176, tyrosine 186, and arginine 223. Position 71 (threonine 71) interacts with Mg(2+). Residues 187 to 257 (SIDDLSKIVY…IADKALSMLK (71 aa)) are small ATPAse domain (RuvB-S). A head domain (RuvB-H) region spans residues 260 to 348 (PVGFDHMDHR…SADQQQTLSI (89 aa)). Residues arginine 315 and arginine 320 each contribute to the DNA site.

It belongs to the RuvB family. As to quaternary structure, homohexamer. Forms an RuvA(8)-RuvB(12)-Holliday junction (HJ) complex. HJ DNA is sandwiched between 2 RuvA tetramers; dsDNA enters through RuvA and exits via RuvB. An RuvB hexamer assembles on each DNA strand where it exits the tetramer. Each RuvB hexamer is contacted by two RuvA subunits (via domain III) on 2 adjacent RuvB subunits; this complex drives branch migration. In the full resolvosome a probable DNA-RuvA(4)-RuvB(12)-RuvC(2) complex forms which resolves the HJ.

The protein resides in the cytoplasm. The catalysed reaction is ATP + H2O = ADP + phosphate + H(+). In terms of biological role, the RuvA-RuvB-RuvC complex processes Holliday junction (HJ) DNA during genetic recombination and DNA repair, while the RuvA-RuvB complex plays an important role in the rescue of blocked DNA replication forks via replication fork reversal (RFR). RuvA specifically binds to HJ cruciform DNA, conferring on it an open structure. The RuvB hexamer acts as an ATP-dependent pump, pulling dsDNA into and through the RuvAB complex. RuvB forms 2 homohexamers on either side of HJ DNA bound by 1 or 2 RuvA tetramers; 4 subunits per hexamer contact DNA at a time. Coordinated motions by a converter formed by DNA-disengaged RuvB subunits stimulates ATP hydrolysis and nucleotide exchange. Immobilization of the converter enables RuvB to convert the ATP-contained energy into a lever motion, pulling 2 nucleotides of DNA out of the RuvA tetramer per ATP hydrolyzed, thus driving DNA branch migration. The RuvB motors rotate together with the DNA substrate, which together with the progressing nucleotide cycle form the mechanistic basis for DNA recombination by continuous HJ branch migration. Branch migration allows RuvC to scan DNA until it finds its consensus sequence, where it cleaves and resolves cruciform DNA. This is Holliday junction branch migration complex subunit RuvB from Francisella tularensis subsp. tularensis (strain FSC 198).